The following is a 247-amino-acid chain: tRNA (guanine-N(7)-)-methyltransferase (247 aa).

S-adenosyl-L-methionine is bound by residues G70, 93–94 (EI), 128–129 (NA), and L148. D151 is an active-site residue. Position 226–228 (226–228 (SEE)) interacts with S-adenosyl-L-methionine.

It belongs to the class I-like SAM-binding methyltransferase superfamily. TrmB family.

It localises to the nucleus. The catalysed reaction is guanosine(46) in tRNA + S-adenosyl-L-methionine = N(7)-methylguanosine(46) in tRNA + S-adenosyl-L-homocysteine. The protein operates within tRNA modification; N(7)-methylguanine-tRNA biosynthesis. Its function is as follows. Catalyzes the formation of N(7)-methylguanine at position 46 (m7G46) in tRNA. The polypeptide is tRNA (guanine-N(7)-)-methyltransferase (Drosophila persimilis (Fruit fly)).